We begin with the raw amino-acid sequence, 406 residues long: Exodeoxyribonuclease 7 large subunit (406 aa).

The protein belongs to the XseA family. Heterooligomer composed of large and small subunits.

It localises to the cytoplasm. It carries out the reaction Exonucleolytic cleavage in either 5'- to 3'- or 3'- to 5'-direction to yield nucleoside 5'-phosphates.. Bidirectionally degrades single-stranded DNA into large acid-insoluble oligonucleotides, which are then degraded further into small acid-soluble oligonucleotides. The polypeptide is Exodeoxyribonuclease 7 large subunit (Desulfitobacterium hafniense (strain Y51)).